Here is a 118-residue protein sequence, read N- to C-terminus: uncharacterized protein (118 aa).

The segment at 49–80 is disordered; the sequence is SKEEHTTSAANLHPRKKKRMPPRRAEKNKAPN. Residues 61-70 are compositionally biased toward basic residues; sequence HPRKKKRMPP.

This is an uncharacterized protein from Saccharomyces cerevisiae (strain ATCC 204508 / S288c) (Baker's yeast).